The chain runs to 304 residues: MGLPNAEEVKAFLMQLQANICAGLERLDGQASFATDSWQRAEGGGGISRVLTDGAVFEQAGVNFSHVMGASMPASATAHRPELAGRSFEAMGVSLVIHPKNPYIPTTHANVRFFIARKEGADPVWWFGGGFDLTPYYPFESDVKEWHQSAKDLCAPFGNEVYPKYKEWCDKYFFLPHRGETRGVGGLFFDDLNHWEFDKCFDYMQAVGNGFLTAYAPIVERRKDTAYGERERDFQLYRRGRYVEFNLVYDRGTLFGLQTGGRTESILMSMPPLVRWQYAYSPEAGTPEAELYERFLKPQDWLAD.

Serine 94 provides a ligand contact to substrate. Residues histidine 98 and histidine 108 each contribute to the a divalent metal cation site. The Proton donor role is filled by histidine 108. 110-112 (NVR) lines the substrate pocket. The a divalent metal cation site is built by histidine 147 and histidine 177. The important for dimerization stretch occupies residues 242–277 (YVEFNLVYDRGTLFGLQTGGRTESILMSMPPLVRWQ). 260 to 262 (GGR) is a substrate binding site.

Belongs to the aerobic coproporphyrinogen-III oxidase family. As to quaternary structure, homodimer. A divalent metal cation serves as cofactor.

It is found in the cytoplasm. It carries out the reaction coproporphyrinogen III + O2 + 2 H(+) = protoporphyrinogen IX + 2 CO2 + 2 H2O. It functions in the pathway porphyrin-containing compound metabolism; protoporphyrin-IX biosynthesis; protoporphyrinogen-IX from coproporphyrinogen-III (O2 route): step 1/1. In terms of biological role, involved in the heme biosynthesis. Catalyzes the aerobic oxidative decarboxylation of propionate groups of rings A and B of coproporphyrinogen-III to yield the vinyl groups in protoporphyrinogen-IX. The polypeptide is Oxygen-dependent coproporphyrinogen-III oxidase (Shewanella amazonensis (strain ATCC BAA-1098 / SB2B)).